The sequence spans 293 residues: Homoserine kinase (293 aa).

ATP is bound at residue Pro84–Ala94.

The protein belongs to the GHMP kinase family. Homoserine kinase subfamily.

It is found in the cytoplasm. The enzyme catalyses L-homoserine + ATP = O-phospho-L-homoserine + ADP + H(+). Its pathway is amino-acid biosynthesis; L-threonine biosynthesis; L-threonine from L-aspartate: step 4/5. Its function is as follows. Catalyzes the ATP-dependent phosphorylation of L-homoserine to L-homoserine phosphate. This Nautilia profundicola (strain ATCC BAA-1463 / DSM 18972 / AmH) protein is Homoserine kinase.